Reading from the N-terminus, the 258-residue chain is Thiazole synthase (258 aa).

The active-site Schiff-base intermediate with DXP is Lys100. Residues Gly161, 187-188 (AG), and 209-210 (NT) each bind 1-deoxy-D-xylulose 5-phosphate.

This sequence belongs to the ThiG family. In terms of assembly, homotetramer. Forms heterodimers with either ThiH or ThiS.

It localises to the cytoplasm. The enzyme catalyses [ThiS sulfur-carrier protein]-C-terminal-Gly-aminoethanethioate + 2-iminoacetate + 1-deoxy-D-xylulose 5-phosphate = [ThiS sulfur-carrier protein]-C-terminal Gly-Gly + 2-[(2R,5Z)-2-carboxy-4-methylthiazol-5(2H)-ylidene]ethyl phosphate + 2 H2O + H(+). The protein operates within cofactor biosynthesis; thiamine diphosphate biosynthesis. Catalyzes the rearrangement of 1-deoxy-D-xylulose 5-phosphate (DXP) to produce the thiazole phosphate moiety of thiamine. Sulfur is provided by the thiocarboxylate moiety of the carrier protein ThiS. In vitro, sulfur can be provided by H(2)S. This is Thiazole synthase from Campylobacter jejuni subsp. jejuni serotype O:2 (strain ATCC 700819 / NCTC 11168).